The chain runs to 489 residues: Putative (R)-citramalate synthase CimA (489 aa).

Residues 3-255 enclose the Pyruvate carboxyltransferase domain; sequence VKILDTTLRD…KTKIKKERLY (253 aa).

It belongs to the alpha-IPM synthase/homocitrate synthase family. In terms of assembly, homodimer.

The enzyme catalyses pyruvate + acetyl-CoA + H2O = (3R)-citramalate + CoA + H(+). The protein operates within amino-acid biosynthesis; L-isoleucine biosynthesis; 2-oxobutanoate from pyruvate: step 1/3. Its function is as follows. Catalyzes the condensation of pyruvate and acetyl-coenzyme A to form (R)-citramalate. The protein is Putative (R)-citramalate synthase CimA (cimA) of Archaeoglobus fulgidus (strain ATCC 49558 / DSM 4304 / JCM 9628 / NBRC 100126 / VC-16).